The primary structure comprises 200 residues: Adenylate kinase (200 aa).

10–15 (GAGKGT) provides a ligand contact to ATP. The NMP stretch occupies residues 30 to 59 (STGDMLRAAVAAGTPVGLEAKAVMESGGLV). Residues Thr31, Arg36, 57-59 (GLV), 85-88 (GFPR), and Gln92 each bind AMP. The LID stretch occupies residues 126 to 142 (KRAAETLARGQAVRKDD). Arg127 lines the ATP pocket. AMP-binding residues include Arg139 and Arg150. Gln178 is an ATP binding site.

The protein belongs to the adenylate kinase family. As to quaternary structure, monomer.

The protein localises to the cytoplasm. The enzyme catalyses AMP + ATP = 2 ADP. The protein operates within purine metabolism; AMP biosynthesis via salvage pathway; AMP from ADP: step 1/1. Catalyzes the reversible transfer of the terminal phosphate group between ATP and AMP. Plays an important role in cellular energy homeostasis and in adenine nucleotide metabolism. This Methylobacterium radiotolerans (strain ATCC 27329 / DSM 1819 / JCM 2831 / NBRC 15690 / NCIMB 10815 / 0-1) protein is Adenylate kinase.